The sequence spans 302 residues: MATLCTSAINMNPNLTNSLSNSINLSSTPTNLSSLRSTFTNSCSLGLNVAVKSVQISRNKPNVVCMSWDGPLSSVKLILQGRNLEVSDNVRSHVEDKVGKSVAKHSHLVREVDVRLSARGGDLSKGPKLRRCEVTLFTKRHGVIRAEEDAESLYSSIDLVSSIIQRKLRKIKDKVSDHGRHMKGFNRSKVRDPEPVRITREEVLEEVESAPAPVSVEDDDFIEEVVRTKYFDMPPLTITEAVEQLENVDHDFYAFRNEETGDINILYKRKEGGYGLIIPKDGKTEKLESLPVQTDKQPSFAE.

Residues Met1–Met66 constitute a chloroplast transit peptide.

Binds to the mRNA channel of the chloroplast small ribosomal subunit and interacts with 16S sRNA nucleotides at the A-site and P-site.

The protein resides in the plastid. The protein localises to the chloroplast stroma. Its function is as follows. Ribosome-binding factor involved in light- and temperature-dependent control of protein synthesis. Interacts with 16S sRNA nucleotides at the A-site and P-site, where it protects the decoding center and inhibits translation by preventing tRNA binding. Stabilizes 70S ribosomes against dissociation. May be recycled by the combined action of ribosome-recycling factor (RRF) and EF-G. This chain is Ribosome-binding factor PSRP1, chloroplastic (PSRP1), found in Spinacia oleracea (Spinach).